Consider the following 395-residue polypeptide: WW domain-containing transcription regulator protein 1 (395 aa).

A Glycyl lysine isopeptide (Lys-Gly) (interchain with G-Cter in ubiquitin) cross-link involves residue lysine 46. The segment at 52-116 (FFKEPDSGSH…AQQHAHLRQQ (65 aa)) is disordered. Positions 61-70 (HSRQSSTDSS) are enriched in polar residues. Serine 62 is subject to Phosphoserine. Serine 89 is modified (phosphoserine; by LATS2). A WW domain is found at 124–157 (LPLPPGWEMTFTATGQRYFLNHIEKITTWQDPRK). The segment at 221–395 (PNALTTQQQQ…NKSEPFLTWL (175 aa)) is required for interaction with PALS1. A coiled-coil region spans residues 224-258 (LTTQQQQQQKLRLQRIQMERERIRMRQEELMRQEA). The span at 277 to 293 (PAMSTDMRSVTNSSSDP) shows a compositional bias: polar residues. Positions 277 to 308 (PAMSTDMRSVTNSSSDPFLNGGPYHSREQSTD) are disordered. Serine 290 is modified (phosphoserine). Serine 306 carries the post-translational modification Phosphoserine; by LATS2. Positions 389-395 (EPFLTWL) match the PDZ-binding motif.

In terms of assembly, binds to SLC9A3R2 via the PDZ motif at the plasma membrane. Binds to YWHAZ in vivo and in vitro through the phosphoserine-binding motif RSHSSP. Interacts (via coiled-coil domain) with SMAD2 (via MH1 domain), SMAD3 and SMAD4. Interacts with MED15. Interacts with PAX8 and NKX2-1. Interacts with TEAD1, TEAD2, TEAD3 and TEAD4. Interacts (via WW domain) with PALS1. Interacts with LATS1. Interacts with YAP1 (when phosphorylated at 'Ser-112'). Interacts (via WW domain) with PRRG4 (via cytoplasmic domain). Interacts (via WW domain) with AMOTL2 (via PPXY motif); the interaction promotes WWTR1/TAZ localization to the cytoplasm and tight junctions, thereby inhibiting its transcriptional coactivator properties. Interacts (via WW domain) with AMOT; the interaction facilitates translocation of WWTR1/TAZ to the cytoplasm. In terms of processing, phosphorylated by LATS2 and STK3/MST2. Phosphorylation by LATS2 results in creation of 14-3-3 binding sites, retention in the cytoplasm, and functional inactivation. Phosphorylation results in the inhibition of transcriptional coactivation through YWHAZ-mediated nuclear export. Ubiquitinated at Lys-46; leading to proteasomal degradation. Deubiquitinated and stabilized by UCHL1 at Lys-46; leading to inhibition of osteoclastogenesis. Highly expressed in kidney, heart, placenta and lung.

The protein resides in the nucleus. Its subcellular location is the cytoplasm. It localises to the cell membrane. The protein localises to the cell junction. It is found in the tight junction. Transcriptional coactivator which acts as a downstream regulatory target in the Hippo signaling pathway that plays a pivotal role in organ size control and tumor suppression by restricting proliferation and promoting apoptosis. The core of this pathway is composed of a kinase cascade wherein STK3/MST2 and STK4/MST1, in complex with its regulatory protein SAV1, phosphorylates and activates LATS1/2 in complex with its regulatory protein MOB1, which in turn phosphorylates and inactivates YAP1 oncoprotein and WWTR1/TAZ. WWTR1 enhances PAX8 and NKX2-1/TTF1-dependent gene activation. In conjunction with YAP1, involved in the regulation of TGFB1-dependent SMAD2 and SMAD3 nuclear accumulation. Plays a key role in coupling SMADs to the transcriptional machinery such as the mediator complex. Regulates embryonic stem-cell self-renewal, promotes cell proliferation and epithelial-mesenchymal transition. This Mus musculus (Mouse) protein is WW domain-containing transcription regulator protein 1.